The sequence spans 501 residues: Cytochrome P450 3A6 (501 aa).

Cysteine 440 contributes to the heme binding site.

This sequence belongs to the cytochrome P450 family. It depends on heme as a cofactor.

The protein localises to the endoplasmic reticulum membrane. It is found in the microsome membrane. It catalyses the reaction an organic molecule + reduced [NADPH--hemoprotein reductase] + O2 = an alcohol + oxidized [NADPH--hemoprotein reductase] + H2O + H(+). In terms of biological role, exhibits progesterone 6 beta-hydroxylase activity. The polypeptide is Cytochrome P450 3A6 (CYP3A6) (Oryctolagus cuniculus (Rabbit)).